Here is a 350-residue protein sequence, read N- to C-terminus: MSHQTGIQASEDVLEMFARARNGKYRLLKLDIEDEQLTVTACEKPASSWEQEYDSLILPLLEDKQPCYIMYRLDSQNAQGFEWIFIAWSPDHSHVRQKMLYAATRATVKKEFGGGHIKEELFGTVKDDISLKGYYKYLACQSSPAPLTMAEEELRQIKIKETQVDIGVDTKHQTLQGIAFPIEKAAFQALEQLREKRLNYVQLKIDIKNETIILADTTNTEVRDLPKRIPKDAARYHFFLYKHSHEGDYLDSFVFIYSMPGYTCSIRERMLYSSCKSPLLDVIENRLLMEIARKIEIDNGDELTPDFLYEEVHPKQHAHKQNFAKPKGPAGKRGIRRLIRGPAEAETAND.

ADF-H domains lie at 4–139 (QTGI…KYLA) and 177–313 (GIAF…EEVH). Positions 316-350 (QHAHKQNFAKPKGPAGKRGIRRLIRGPAEAETAND) are disordered.

This sequence belongs to the actin-binding proteins ADF family. Twinfilin subfamily. As to quaternary structure, interacts with G-actin; ADP-actin form.

The protein localises to the cytoplasm. Its subcellular location is the cytoskeleton. In terms of biological role, actin-binding protein involved in motile and morphological processes. Inhibits actin polymerization, likely by sequestering G-actin. The protein is Twinfilin-1 (twf1) of Xenopus tropicalis (Western clawed frog).